The sequence spans 478 residues: MGRKKKKQLKPWCWYCNRDFDDEKILIQHQKAKHFKCHICHKKLYTGPGLAIHCMQVHKETIDAVPNAIPGRTDIELEIYGMEGIPEKDMDERRRLLEQKTQESQKKKQQDDSDEYDDDDSAASTSFQPQPVQPQQGYIPPMAQPGLPPVPGAPGMPPGIPPLMPGVPPLMPGMPPVMPGMPPGMMPMGGMMPPGPGIPPLMPGMPPGMPPPVPRPGIPPMTQAQAVSAPGILNRPPAPTATVPAPQPPVTKPLFPSAGQMGTPVTSSSTASSNSESLSASSKALFPSTAQAQAAVQGPVGTDFKPLNSTPATTTEPPKPTFPAYTQSTASTTSTTNSTAAKPAASITSKPATLTTTSATSKLIHPDEDISLEERRAQLPKYQRNLPRPGQAPIGNPPVGPIGGMMPPQPGIPQQQGMRPPMPPHGQYGGHHQGMPGYLPGAMPPYGQGPPMVPPYQGGPPRPPMGMRPPVMSQGGRY.

Residues 1-92 (MGRKKKKQLK…EGIPEKDMDE (92 aa)) are microtubule-binding region. 2 consecutive C2H2-type zinc fingers follow at residues 11-34 (PWCWYCNRDFDDEKILIQHQKAKH) and 35-58 (FKCHICHKKLYTGPGLAIHCMQVH). The span at 99-111 (QKTQESQKKKQQD) shows a compositional bias: basic and acidic residues. Disordered regions lie at residues 99–157 (QKTQ…PGMP), 238–276 (APTATVPAPQPPVTKPLFPSAGQMGTPVTSSSTASSNSE), 300–362 (VGTD…ATSK), and 384–478 (RNLP…GGRY). Acidic residues predominate over residues 112–121 (DSDEYDDDDS). Polar residues predominate over residues 127–136 (FQPQPVQPQQ). Residues 142–157 (MAQPGLPPVPGAPGMP) are compositionally biased toward pro residues. Low complexity-rich tracts occupy residues 267–276 (SSSTASSNSE), 310–362 (TPAT…ATSK), and 433–446 (QGMPGYLPGAMPPY). The segment at 359-391 (ATSKLIHPDEDISLEERRAQLPKYQRNLPRPGQ) is GLEBS. Residues 447–467 (GQGPPMVPPYQGGPPRPPMGM) show a composition bias toward pro residues.

As to quaternary structure, interacts (via GLEBS region) with BUB3. As to expression, ubiquitous.

Its subcellular location is the nucleus. It is found in the chromosome. It localises to the centromere. The protein localises to the kinetochore. The protein resides in the cytoplasm. Its subcellular location is the cytoskeleton. It is found in the spindle. In terms of biological role, kinetochore- and microtubule-binding protein that plays a key role in spindle assembly. ZNF207/BuGZ is mainly composed of disordered low-complexity regions and undergoes phase transition or coacervation to form temperature-dependent liquid droplets. Coacervation promotes microtubule bundling and concentrates tubulin, promoting microtubule polymerization and assembly of spindle and spindle matrix by concentrating its building blocks. Also acts as a regulator of mitotic chromosome alignment by mediating the stability and kinetochore loading of BUB3. Mechanisms by which BUB3 is protected are unclear: according to a first report, ZNF207/BuGZ may act by blocking ubiquitination and proteasomal degradation of BUB3. According to another report, the stabilization is independent of the proteasome. This Homo sapiens (Human) protein is BUB3-interacting and GLEBS motif-containing protein ZNF207.